We begin with the raw amino-acid sequence, 129 residues long: Small ribosomal subunit protein uS11 (129 aa).

The protein belongs to the universal ribosomal protein uS11 family. In terms of assembly, part of the 30S ribosomal subunit. Interacts with proteins S7 and S18. Binds to IF-3.

Functionally, located on the platform of the 30S subunit, it bridges several disparate RNA helices of the 16S rRNA. Forms part of the Shine-Dalgarno cleft in the 70S ribosome. This chain is Small ribosomal subunit protein uS11, found in Novosphingobium aromaticivorans (strain ATCC 700278 / DSM 12444 / CCUG 56034 / CIP 105152 / NBRC 16084 / F199).